A 187-amino-acid chain; its full sequence is Elongation factor P (187 aa).

The protein belongs to the elongation factor P family.

The protein localises to the cytoplasm. It participates in protein biosynthesis; polypeptide chain elongation. Functionally, involved in peptide bond synthesis. Stimulates efficient translation and peptide-bond synthesis on native or reconstituted 70S ribosomes in vitro. Probably functions indirectly by altering the affinity of the ribosome for aminoacyl-tRNA, thus increasing their reactivity as acceptors for peptidyl transferase. The chain is Elongation factor P (efp) from Treponema pallidum (strain Nichols).